The chain runs to 232 residues: Phosphatidylserine decarboxylase proenzyme (232 aa).

The Schiff-base intermediate with substrate; via pyruvic acid role is filled by serine 190. Residue serine 190 is modified to Pyruvic acid (Ser); by autocatalysis.

This sequence belongs to the phosphatidylserine decarboxylase family. PSD-A subfamily. As to quaternary structure, heterodimer of a large membrane-associated beta subunit and a small pyruvoyl-containing alpha subunit. The cofactor is pyruvate. In terms of processing, is synthesized initially as an inactive proenzyme. Formation of the active enzyme involves a self-maturation process in which the active site pyruvoyl group is generated from an internal serine residue via an autocatalytic post-translational modification. Two non-identical subunits are generated from the proenzyme in this reaction, and the pyruvate is formed at the N-terminus of the alpha chain, which is derived from the carboxyl end of the proenzyme. The post-translation cleavage follows an unusual pathway, termed non-hydrolytic serinolysis, in which the side chain hydroxyl group of the serine supplies its oxygen atom to form the C-terminus of the beta chain, while the remainder of the serine residue undergoes an oxidative deamination to produce ammonia and the pyruvoyl prosthetic group on the alpha chain.

Its subcellular location is the cell membrane. It carries out the reaction a 1,2-diacyl-sn-glycero-3-phospho-L-serine + H(+) = a 1,2-diacyl-sn-glycero-3-phosphoethanolamine + CO2. It functions in the pathway phospholipid metabolism; phosphatidylethanolamine biosynthesis; phosphatidylethanolamine from CDP-diacylglycerol: step 2/2. Functionally, catalyzes the formation of phosphatidylethanolamine (PtdEtn) from phosphatidylserine (PtdSer). This chain is Phosphatidylserine decarboxylase proenzyme, found in Rhizobium leguminosarum bv. trifolii (strain WSM2304).